Here is a 297-residue protein sequence, read N- to C-terminus: Phosphatidylserine decarboxylase proenzyme (297 aa).

Residues aspartate 92, histidine 149, and serine 254 each act as charge relay system; for autoendoproteolytic cleavage activity in the active site. The active-site Schiff-base intermediate with substrate; via pyruvic acid; for decarboxylase activity is serine 254. Serine 254 bears the Pyruvic acid (Ser); by autocatalysis mark.

This sequence belongs to the phosphatidylserine decarboxylase family. PSD-B subfamily. Prokaryotic type I sub-subfamily. In terms of assembly, heterodimer of a large membrane-associated beta subunit and a small pyruvoyl-containing alpha subunit. Requires pyruvate as cofactor. Post-translationally, is synthesized initially as an inactive proenzyme. Formation of the active enzyme involves a self-maturation process in which the active site pyruvoyl group is generated from an internal serine residue via an autocatalytic post-translational modification. Two non-identical subunits are generated from the proenzyme in this reaction, and the pyruvate is formed at the N-terminus of the alpha chain, which is derived from the carboxyl end of the proenzyme. The autoendoproteolytic cleavage occurs by a canonical serine protease mechanism, in which the side chain hydroxyl group of the serine supplies its oxygen atom to form the C-terminus of the beta chain, while the remainder of the serine residue undergoes an oxidative deamination to produce ammonia and the pyruvoyl prosthetic group on the alpha chain. During this reaction, the Ser that is part of the protease active site of the proenzyme becomes the pyruvoyl prosthetic group, which constitutes an essential element of the active site of the mature decarboxylase.

Its subcellular location is the cell membrane. It carries out the reaction a 1,2-diacyl-sn-glycero-3-phospho-L-serine + H(+) = a 1,2-diacyl-sn-glycero-3-phosphoethanolamine + CO2. Its pathway is phospholipid metabolism; phosphatidylethanolamine biosynthesis; phosphatidylethanolamine from CDP-diacylglycerol: step 2/2. In terms of biological role, catalyzes the formation of phosphatidylethanolamine (PtdEtn) from phosphatidylserine (PtdSer). This Bordetella bronchiseptica (strain ATCC BAA-588 / NCTC 13252 / RB50) (Alcaligenes bronchisepticus) protein is Phosphatidylserine decarboxylase proenzyme.